Reading from the N-terminus, the 170-residue chain is MSLPNPAELIRQMATDLNAHLSKRGISDPRFIGIRTGGVWVAQALLEALNNPSPLGTLDVSFYRDDFSQNGLHPQVRPSELPFEIEGQHLVLIDDVLMSGRTVRAALNELFDYGRPASVTLVCLLDLNAGELPIRPNVVGATLSLAPNERIKLSGPEPLALELQDLSTAL.

A PRPP-binding motif is present at residues leucine 90–threonine 102.

This sequence belongs to the purine/pyrimidine phosphoribosyltransferase family. PyrR subfamily.

The enzyme catalyses UMP + diphosphate = 5-phospho-alpha-D-ribose 1-diphosphate + uracil. Functionally, regulates the transcription of the pyrimidine nucleotide (pyr) operon in response to exogenous pyrimidines. Its function is as follows. Also displays a weak uracil phosphoribosyltransferase activity which is not physiologically significant. In Pseudomonas syringae pv. tomato (strain ATCC BAA-871 / DC3000), this protein is Bifunctional protein PyrR.